The chain runs to 817 residues: Neurabin-2 (817 aa).

Actin-binding stretches follow at residues 1–154 and 164–283; these read MMKT…FERS and EAAA…QHRV. The disordered stretch occupies residues 1-165; that stretch reads MMKTEPRGPG…PAAAGGDKEA (165 aa). Phosphoserine occurs at positions 15 and 17. The segment covering 44–58 has biased composition (basic residues); sequence GAHHKKYGSNVHRIK. Phosphoserine occurs at positions 94, 100, and 116. An interaction with D(2) dopamine receptor region spans residues 100–371; the sequence is SLNENVDHSA…PERGVGNGRA (272 aa). A compositionally biased stretch (pro residues) spans 131–141; it reads SAQPAPPPHPP. The interaction with ADRA2A, ADRA2B and ADRA2C stretch occupies residues 169 to 255; sequence RLLRQERAGL…KRSRVFQPPP (87 aa). A Phosphoserine modification is found at Ser192. The residue at position 193 (Thr193) is a Phosphothreonine. Ser205 is modified (phosphoserine). Thr207 bears the Phosphothreonine mark. Residues 216-447 are disordered; it reads EKADSRTGLH…SEEEDPAPSR (232 aa). Over residues 252–261 the composition is skewed to pro residues; sequence QPPPPPPPAP. The span at 291-302 shows a compositional bias: basic and acidic residues; the sequence is KPREVRKIKPVE. Residues 333–342 are compositionally biased toward low complexity; sequence STVATAASPA. Over residues 344 to 356 the composition is skewed to basic and acidic residues; it reads EEPKAQAAPEKEA. Over residues 410–425 the composition is skewed to acidic residues; that stretch reads LEEDDEDDEEDGEPPY. An interaction with protein phosphatase 1 region spans residues 417–494; that stretch reads DEEDGEPPYE…LEKRVERLEL (78 aa). The residue at position 438 (Ser438) is a Phosphoserine. A PP1-binding motif motif is present at residues 447 to 451; it reads RKIHF. The tract at residues 480-525 is interaction with RGS2; sequence SAEYELEKRVERLELFPVELEKDSEGLGISIIGMGAGADMGLEKLG. The region spanning 496-584 is the PDZ domain; sequence PVELEKDSEG…RVRFMIGRER (89 aa). The interaction with TGN38 stretch occupies residues 595–816; it reads IQQTLEQERW…NLQTLRNSNS (222 aa). Position 658 is a phosphoserine (Ser658). A coiled-coil region spans residues 671-788; sequence FKELQIKHAV…QRRVLEESEL (118 aa).

In terms of assembly, interacts with DCLK2. Possibly exists as a homodimer, homotrimer or a homotetramer. Interacts with F-actin, PPP1CA, neurabin-1, TGN38 and D(2) dopamine receptor. Interacts with RGS1, RGS2, RGS4, RGS19 and ADRA1B, ADRA2A, ADRA2B, ADRA2C, CDKN2A, PPP1R2, RASGFR1 and TIAM1. Interacts (via C-terminus) with SPATA13 (via C-terminal tail). Interacts with ADRA2B. Stimulation of D1 (but not D2) dopamine receptors induces Ser-94 phosphorylation. Dephosphorylation of Ser-94 is mediated mainly by PP1 and to a lesser extent by PP2A. Phosphorylation of spinophilin disrupts its association with F-actin, but does not affect its binding to PP1.

It localises to the cytoplasm. The protein resides in the cytoskeleton. It is found in the nucleus. The protein localises to the cell projection. Its subcellular location is the dendritic spine. It localises to the postsynaptic density. The protein resides in the synapse. It is found in the cell junction. The protein localises to the adherens junction. Its subcellular location is the cell membrane. It localises to the lamellipodium. The protein resides in the filopodium. It is found in the ruffle membrane. Functionally, seems to act as a scaffold protein in multiple signaling pathways. Modulates excitatory synaptic transmission and dendritic spine morphology. Binds to actin filaments (F-actin) and shows cross-linking activity. Binds along the sides of the F-actin. May play an important role in linking the actin cytoskeleton to the plasma membrane at the synaptic junction. Believed to target protein phosphatase 1/PP1 to dendritic spines, which are rich in F-actin, and regulates its specificity toward ion channels and other substrates, such as AMPA-type and NMDA-type glutamate receptors. Plays a role in regulation of G-protein coupled receptor signaling, including dopamine D2 receptors and alpha-adrenergic receptors. May establish a signaling complex for dopaminergic neurotransmission through D2 receptors by linking receptors downstream signaling molecules and the actin cytoskeleton. Binds to ADRA1B and RGS2 and mediates regulation of ADRA1B signaling. May confer to Rac signaling specificity by binding to both, RacGEFs and Rac effector proteins. Probably regulates p70 S6 kinase activity by forming a complex with TIAM1. Required for hepatocyte growth factor (HGF)-induced cell migration. This is Neurabin-2 (PPP1R9B) from Homo sapiens (Human).